Here is a 448-residue protein sequence, read N- to C-terminus: Probable glycine dehydrogenase (decarboxylating) subunit 1 (448 aa).

It belongs to the GcvP family. N-terminal subunit subfamily. As to quaternary structure, the glycine cleavage system is composed of four proteins: P, T, L and H. In this organism, the P 'protein' is a heterodimer of two subunits.

The catalysed reaction is N(6)-[(R)-lipoyl]-L-lysyl-[glycine-cleavage complex H protein] + glycine + H(+) = N(6)-[(R)-S(8)-aminomethyldihydrolipoyl]-L-lysyl-[glycine-cleavage complex H protein] + CO2. The glycine cleavage system catalyzes the degradation of glycine. The P protein binds the alpha-amino group of glycine through its pyridoxal phosphate cofactor; CO(2) is released and the remaining methylamine moiety is then transferred to the lipoamide cofactor of the H protein. In Listeria monocytogenes serovar 1/2a (strain ATCC BAA-679 / EGD-e), this protein is Probable glycine dehydrogenase (decarboxylating) subunit 1.